We begin with the raw amino-acid sequence, 158 residues long: Kalata-B3/B6 (158 aa).

Positions 1–22 are cleaved as a signal peptide; the sequence is MAKFTKSLVLCLLLAAFVGAFG. Positions 23–66 are excised as a propeptide; the sequence is AELSEADKANVVNEIAANIQREILKGVKSSETTLTMFLKEMQLK. The segment at residues 67–96 is a cross-link (cyclopeptide (Gly-Asn)); it reads GLPTCGETCFGGTCNTPGCSCSSWPICTRN. Cystine bridges form between Cys71/Cys85, Cys75/Cys87, and Cys80/Cys93. Positions 97–121 are excised as a propeptide; sequence GLPKRAGVKSSETTLTMFLKEMQLK. Residues 122-151 constitute a cross-link (cyclopeptide (Gly-Asp)); the sequence is GLPTCGETCFGGTCNTPGCTCDPWPICTRD. Intrachain disulfides connect Cys126-Cys140, Cys130-Cys142, and Cys135-Cys148. The propeptide occupies 152-158; that stretch reads GLPSAAA.

This sequence belongs to the cyclotide family. Moebius subfamily. In terms of processing, kalata-B3 and kalata-B6 are cyclic peptides.

In terms of biological role, probably participates in a plant defense mechanism. Has hemolytic activity. The sequence is that of Kalata-B3/B6 (OAK2) from Oldenlandia affinis.